Consider the following 545-residue polypeptide: Chaperonin GroEL 1 (545 aa).

ATP-binding positions include 29-32 (TLGP), 86-90 (DGTTT), Gly413, 479-481 (DAA), and Asp495. Residues 525–545 (PEPKENNPAGSGAGMGGDFDY) are disordered. Over residues 535–545 (SGAGMGGDFDY) the composition is skewed to gly residues.

Belongs to the chaperonin (HSP60) family. In terms of assembly, forms a cylinder of 14 subunits composed of two heptameric rings stacked back-to-back. Interacts with the co-chaperonin GroES.

It localises to the cytoplasm. The catalysed reaction is ATP + H2O + a folded polypeptide = ADP + phosphate + an unfolded polypeptide.. Together with its co-chaperonin GroES, plays an essential role in assisting protein folding. The GroEL-GroES system forms a nano-cage that allows encapsulation of the non-native substrate proteins and provides a physical environment optimized to promote and accelerate protein folding. The sequence is that of Chaperonin GroEL 1 from Thermosynechococcus vestitus (strain NIES-2133 / IAM M-273 / BP-1).